Consider the following 181-residue polypeptide: Acireductone dioxygenase (181 aa).

Positions 97, 99, 103, and 141 each coordinate Fe(2+). Ni(2+)-binding residues include His-97, His-99, Glu-103, and His-141.

The protein belongs to the acireductone dioxygenase (ARD) family. In terms of assembly, monomer. Fe(2+) is required as a cofactor. Ni(2+) serves as cofactor.

It carries out the reaction 1,2-dihydroxy-5-(methylsulfanyl)pent-1-en-3-one + O2 = 3-(methylsulfanyl)propanoate + CO + formate + 2 H(+). The enzyme catalyses 1,2-dihydroxy-5-(methylsulfanyl)pent-1-en-3-one + O2 = 4-methylsulfanyl-2-oxobutanoate + formate + 2 H(+). It participates in amino-acid biosynthesis; L-methionine biosynthesis via salvage pathway; L-methionine from S-methyl-5-thio-alpha-D-ribose 1-phosphate: step 5/6. Its function is as follows. Catalyzes 2 different reactions between oxygen and the acireductone 1,2-dihydroxy-3-keto-5-methylthiopentene (DHK-MTPene) depending upon the metal bound in the active site. Fe-containing acireductone dioxygenase (Fe-ARD) produces formate and 2-keto-4-methylthiobutyrate (KMTB), the alpha-ketoacid precursor of methionine in the methionine recycle pathway. Ni-containing acireductone dioxygenase (Ni-ARD) produces methylthiopropionate, carbon monoxide and formate, and does not lie on the methionine recycle pathway. This chain is Acireductone dioxygenase, found in Stutzerimonas stutzeri (strain A1501) (Pseudomonas stutzeri).